Here is a 549-residue protein sequence, read N- to C-terminus: Cytoplasmic trehalase (549 aa).

Substrate is bound by residues R168, 175–176 (WD), N212, 221–223 (RSQ), 292–294 (RDE), and G324. Residues D326 and E509 each act as proton donor/acceptor in the active site. E525 serves as a coordination point for substrate.

This sequence belongs to the glycosyl hydrolase 37 family. Monomer.

It localises to the cytoplasm. The catalysed reaction is alpha,alpha-trehalose + H2O = alpha-D-glucose + beta-D-glucose. Its pathway is glycan degradation; trehalose degradation; D-glucose from alpha,alpha-trehalose: step 1/1. In terms of biological role, hydrolyzes trehalose to glucose. Could be involved, in cells returning to low osmolarity conditions, in the utilization of the accumulated cytoplasmic trehalose, which was synthesized in response to high osmolarity. This is Cytoplasmic trehalase from Shigella flexneri serotype 5b (strain 8401).